We begin with the raw amino-acid sequence, 416 residues long: Keratin, type I cuticular Ha1 (416 aa).

The segment at 1-56 (MPYNFCLPSLSCRTSCSSRPCVPPSCHSCTLPGACNIPANVSNCNWFCEGSFNGSE) is head. An IF rod domain is found at 56 to 367 (EKETMQFLND…SLLESEDCNL (312 aa)). The segment at 57–91 (KETMQFLNDRLASYLEKVRQLERDNAELENLIRER) is coil 1A. Residues 92–102 (SQQQEPLLCPS) are linker 1. Residues 103–203 (YQSYFKTIEE…HEQEVNTLRC (101 aa)) form a coil 1B region. The segment at 204-219 (QLGDRLNVEVDAAPTV) is linker 12. The tract at residues 220–363 (DLNRVLNETR…NTYRSLLESE (144 aa)) is coil 2. A tail region spans residues 364 to 416 (DCNLPSNPCATTNACSKPIGPCLSNPCTSCVPPAPCTPCAPRPRCGPCNSFVR).

Belongs to the intermediate filament family. In terms of tissue distribution, present in scalp but not in hairless skin. Abundantly expressed in the differentiating cortex of growing (anagen) hair. Expression is restricted to the keratinocytes of the hair cortex and is absent from inner root sheath and medulla.

This chain is Keratin, type I cuticular Ha1 (KRT31), found in Homo sapiens (Human).